The primary structure comprises 573 residues: DNA polymerase lambda (573 aa).

The BRCT domain maps to Asp-35–Leu-131. The segment at Thr-126–Gly-235 is disordered. Residues Asp-127–Asp-149 are compositionally biased toward polar residues. The interval Lys-263–Tyr-277 is DNA-binding. The active-site Schiff-base intermediate with DNA is Lys-310. Positions Gly-343–Thr-346 are DNA-binding. Residues Arg-384, Ser-415 to Arg-418, and Gly-424 to Asp-427 contribute to the dCTP site. The tract at residues Arg-418–Asp-427 is involved in primer binding. Mn(2+)-binding residues include Asp-425, Asp-427, and Asp-488. The DNA-binding stretch occupies residues Glu-464–Tyr-503. A dCTP-binding site is contributed by Asn-511.

The protein belongs to the DNA polymerase type-X family. As to quaternary structure, interacts with PCNA. Interacts with PAXX; promoting POLL recruitment to double-strand breaks (DSBs) and stimulation of the end-filling activity of POLL. Interacts with XRCC4; promoting POLL recruitment to double-strand breaks (DSBs) and stimulation of the end-filling activity of POLL. Interacts with NHEJ1/XLF; promoting POLL recruitment to double-strand breaks (DSBs) and stimulation of the end-filling activity of POLL. Mn(2+) serves as cofactor.

The protein localises to the nucleus. It carries out the reaction DNA(n) + a 2'-deoxyribonucleoside 5'-triphosphate = DNA(n+1) + diphosphate. In terms of biological role, DNA polymerase that functions in several pathways of DNA repair. Involved in base excision repair (BER) responsible for repair of lesions that give rise to abasic (AP) sites in DNA. Also contributes to DNA double-strand break repair by non-homologous end joining and homologous recombination. Has both template-dependent and template-independent (terminal transferase) DNA polymerase activities. Also has a 5'-deoxyribose-5-phosphate lyase (dRP lyase) activity. The protein is DNA polymerase lambda of Rattus norvegicus (Rat).